Here is a 63-residue protein sequence, read N- to C-terminus: Large ribosomal subunit protein bL32 (63 aa).

A compositionally biased stretch (basic residues) spans 1–18 (MPVPKRKTSPSRRGKRRS). A disordered region spans residues 1–26 (MPVPKRKTSPSRRGKRRSHDGLRPEN).

It belongs to the bacterial ribosomal protein bL32 family.

The sequence is that of Large ribosomal subunit protein bL32 from Neorickettsia sennetsu (strain ATCC VR-367 / Miyayama) (Ehrlichia sennetsu).